Reading from the N-terminus, the 542-residue chain is Membrane protein insertase YidC (542 aa).

The next 5 membrane-spanning stretches (helical) occupy residues 7 to 27 (LLVM…QQDF), 338 to 358 (FALL…IIGV), 417 to 437 (MGGC…YWTF), 455 to 475 (LSAQ…MFLL), and 494 to 514 (FMPV…VLYW).

Belongs to the OXA1/ALB3/YidC family. Type 1 subfamily. Interacts with the Sec translocase complex via SecD. Specifically interacts with transmembrane segments of nascent integral membrane proteins during membrane integration.

It is found in the cell inner membrane. Functionally, required for the insertion and/or proper folding and/or complex formation of integral membrane proteins into the membrane. Involved in integration of membrane proteins that insert both dependently and independently of the Sec translocase complex, as well as at least some lipoproteins. Aids folding of multispanning membrane proteins. This is Membrane protein insertase YidC from Actinobacillus pleuropneumoniae serotype 3 (strain JL03).